A 189-amino-acid polypeptide reads, in one-letter code: Isopentenyl-diphosphate Delta-isomerase 2 (189 aa).

Mn(2+)-binding residues include His-24 and His-30. The region spanning 28 to 160 is the Nudix hydrolase domain; sequence ALHRAISIFV…PETYSFWLAA (133 aa). The active site involves Cys-65. Cys-65 lines the Mg(2+) pocket. His-67 contributes to the Mn(2+) binding site. Glu-85 contacts Mg(2+). Residues Glu-110 and Glu-112 each contribute to the Mn(2+) site. Glu-112 is a catalytic residue.

This sequence belongs to the IPP isomerase type 1 family. It depends on Mg(2+) as a cofactor. The cofactor is Mn(2+).

The protein localises to the cytoplasm. It catalyses the reaction isopentenyl diphosphate = dimethylallyl diphosphate. It participates in isoprenoid biosynthesis; dimethylallyl diphosphate biosynthesis; dimethylallyl diphosphate from isopentenyl diphosphate: step 1/1. In terms of biological role, catalyzes the 1,3-allylic rearrangement of the homoallylic substrate isopentenyl (IPP) to its highly electrophilic allylic isomer, dimethylallyl diphosphate (DMAPP). The protein is Isopentenyl-diphosphate Delta-isomerase 2 of Aromatoleum aromaticum (strain DSM 19018 / LMG 30748 / EbN1) (Azoarcus sp. (strain EbN1)).